A 218-amino-acid chain; its full sequence is Thiopurine S-methyltransferase (218 aa).

S-adenosyl-L-methionine-binding residues include W11, L46, E67, and R122.

It belongs to the class I-like SAM-binding methyltransferase superfamily. TPMT family.

The protein localises to the cytoplasm. The enzyme catalyses S-adenosyl-L-methionine + a thiopurine = S-adenosyl-L-homocysteine + a thiopurine S-methylether.. This chain is Thiopurine S-methyltransferase, found in Vibrio cholerae serotype O1 (strain ATCC 39315 / El Tor Inaba N16961).